The primary structure comprises 361 residues: uncharacterized protein (361 aa).

33–40 (GPINSGKT) is a binding site for ATP.

It belongs to the archaeal ATPase family.

This is an uncharacterized protein from Methanocaldococcus jannaschii (strain ATCC 43067 / DSM 2661 / JAL-1 / JCM 10045 / NBRC 100440) (Methanococcus jannaschii).